The following is a 417-amino-acid chain: Tryptophan synthase beta chain (417 aa).

Lys-108 is subject to N6-(pyridoxal phosphate)lysine.

The protein belongs to the TrpB family. Tetramer of two alpha and two beta chains. Pyridoxal 5'-phosphate serves as cofactor.

It catalyses the reaction (1S,2R)-1-C-(indol-3-yl)glycerol 3-phosphate + L-serine = D-glyceraldehyde 3-phosphate + L-tryptophan + H2O. It participates in amino-acid biosynthesis; L-tryptophan biosynthesis; L-tryptophan from chorismate: step 5/5. The beta subunit is responsible for the synthesis of L-tryptophan from indole and L-serine. This Mycobacterium leprae (strain TN) protein is Tryptophan synthase beta chain (trpB).